Consider the following 301-residue polypeptide: rRNA methyltransferase 1, mitochondrial (301 aa).

The N-terminal 11 residues, 1 to 11, are a transit peptide targeting the mitochondrion; the sequence is MIRSRVNLARE. Residues 121-141 form a disordered region; the sequence is YNNKNGQDSPHNDLNEGKSSS.

The protein belongs to the class IV-like SAM-binding methyltransferase superfamily. RNA methyltransferase TrmH family.

It is found in the mitochondrion. It carries out the reaction a guanosine in 21S rRNA + S-adenosyl-L-methionine = a 2'-O-methylguanosine in 21S rRNA + S-adenosyl-L-homocysteine + H(+). Functionally, S-adenosyl-L-methionine-dependent 2'-O-ribose methyltransferase that catalyzes the formation of the 2'-O-methylguanosine corresponding to position 2270 in S.cerevisiae 21S mitochondrial large subunit ribosomal RNA (mtLSU rRNA), a universally conserved modification in the peptidyl transferase domain of the mtLSU rRNA. This Schizosaccharomyces pombe (strain 972 / ATCC 24843) (Fission yeast) protein is rRNA methyltransferase 1, mitochondrial.